We begin with the raw amino-acid sequence, 132 residues long: MKGLGIKVPRAVSTGTKLTCADNTGARVVQVVSVFGYHGVRRRQPKLGLADIATVSVKKGTPDMRRKLVRAVVIRQKKEIRRPSGLRLSFEDNAVVVVDDKNEPRGTEIKGPVAREVAIRYPRIGSMATIIV.

Belongs to the universal ribosomal protein uL14 family. As to quaternary structure, part of the 50S ribosomal subunit. Forms a cluster with proteins L3 and L24e, part of which may contact the 16S rRNA in 2 intersubunit bridges.

Functionally, binds to 23S rRNA. Forms part of two intersubunit bridges in the 70S ribosome. The chain is Large ribosomal subunit protein uL14 from Methanospirillum hungatei JF-1 (strain ATCC 27890 / DSM 864 / NBRC 100397 / JF-1).